A 477-amino-acid polypeptide reads, in one-letter code: tRNA(Ile)-lysidine synthase (477 aa).

36–41 (SGGADS) contributes to the ATP binding site.

It belongs to the tRNA(Ile)-lysidine synthase family.

It is found in the cytoplasm. The enzyme catalyses cytidine(34) in tRNA(Ile2) + L-lysine + ATP = lysidine(34) in tRNA(Ile2) + AMP + diphosphate + H(+). Its function is as follows. Ligates lysine onto the cytidine present at position 34 of the AUA codon-specific tRNA(Ile) that contains the anticodon CAU, in an ATP-dependent manner. Cytidine is converted to lysidine, thus changing the amino acid specificity of the tRNA from methionine to isoleucine. The sequence is that of tRNA(Ile)-lysidine synthase from Treponema pallidum (strain Nichols).